A 470-amino-acid chain; its full sequence is 3-isopropylmalate dehydratase large subunit (470 aa).

The [4Fe-4S] cluster site is built by Cys-347, Cys-407, and Cys-410.

It belongs to the aconitase/IPM isomerase family. LeuC type 1 subfamily. As to quaternary structure, heterodimer of LeuC and LeuD. The cofactor is [4Fe-4S] cluster.

The catalysed reaction is (2R,3S)-3-isopropylmalate = (2S)-2-isopropylmalate. It functions in the pathway amino-acid biosynthesis; L-leucine biosynthesis; L-leucine from 3-methyl-2-oxobutanoate: step 2/4. Functionally, catalyzes the isomerization between 2-isopropylmalate and 3-isopropylmalate, via the formation of 2-isopropylmaleate. The protein is 3-isopropylmalate dehydratase large subunit of Shewanella amazonensis (strain ATCC BAA-1098 / SB2B).